Here is a 161-residue protein sequence, read N- to C-terminus: Allophycocyanin beta subunit (161 aa).

An N4-methylasparagine modification is found at Asn-71. A (2R,3E)-phycocyanobilin-binding site is contributed by Cys-81.

The protein belongs to the phycobiliprotein family. In terms of assembly, heterodimer of an alpha and a beta chain. Post-translationally, contains one covalently linked phycocyanobilin chromophore. The chromophore is added by the phycocyanobilin lyase CpcUS.

The protein resides in the cellular thylakoid membrane. Functionally, light-harvesting photosynthetic bile pigment-protein from the phycobiliprotein complex. Allophycocyanin has a maximum absorption at approximately 650 nanometers. The sequence is that of Allophycocyanin beta subunit (apcB) from Picosynechococcus sp. (strain ATCC 27264 / PCC 7002 / PR-6) (Agmenellum quadruplicatum).